Here is a 128-residue protein sequence, read N- to C-terminus: Large ribosomal subunit protein eL22 (128 aa).

T62 is subject to Phosphothreonine. S66 bears the Phosphoserine mark. K69 is subject to N6-succinyllysine.

Belongs to the eukaryotic ribosomal protein eL22 family. Component of the large ribosomal subunit.

The protein localises to the cytoplasm. Functionally, component of the large ribosomal subunit. The ribosome is a large ribonucleoprotein complex responsible for the synthesis of proteins in the cell. This is Large ribosomal subunit protein eL22 (Rpl22) from Rattus norvegicus (Rat).